A 411-amino-acid polypeptide reads, in one-letter code: Arginase (411 aa).

The segment at 83–106 is disordered; it reads NNYINNNDNNNDNNNDNNNDNNNN. 4 residues coordinate Mn(2+): His-193, Asp-216, His-218, and Asp-220. The L-arginine site is built by Asn-222, Ser-229, and Asp-274. Residues Asp-323 and Asp-325 each contribute to the Mn(2+) site.

Belongs to the arginase family. In terms of assembly, homotrimer; oligomerization is dependent on Mn(2+) binding. It depends on Mn(2+) as a cofactor.

The catalysed reaction is L-arginine + H2O = urea + L-ornithine. The protein operates within nitrogen metabolism; urea cycle; L-ornithine and urea from L-arginine: step 1/1. With respect to regulation, feedback inhibition by product L-ornithine,. Inhibited by 2(S)-amino-6-boronohexanoic acid (ABH); however, with less efficiency than human ARG1. Functionally, catalyzes the hydrolysis of L-arginine into urea and L-ornithine, which is a precursor for polyamine biosynthesis. May play a role in parasite intra-hepatic development during the host liver stage. This chain is Arginase, found in Plasmodium falciparum (isolate 3D7).